A 252-amino-acid chain; its full sequence is Imidazole glycerol phosphate synthase subunit HisF (252 aa).

Residues Asp-12 and Asp-131 contribute to the active site.

The protein belongs to the HisA/HisF family. As to quaternary structure, heterodimer of HisH and HisF.

The protein resides in the cytoplasm. The catalysed reaction is 5-[(5-phospho-1-deoxy-D-ribulos-1-ylimino)methylamino]-1-(5-phospho-beta-D-ribosyl)imidazole-4-carboxamide + L-glutamine = D-erythro-1-(imidazol-4-yl)glycerol 3-phosphate + 5-amino-1-(5-phospho-beta-D-ribosyl)imidazole-4-carboxamide + L-glutamate + H(+). It participates in amino-acid biosynthesis; L-histidine biosynthesis; L-histidine from 5-phospho-alpha-D-ribose 1-diphosphate: step 5/9. In terms of biological role, IGPS catalyzes the conversion of PRFAR and glutamine to IGP, AICAR and glutamate. The HisF subunit catalyzes the cyclization activity that produces IGP and AICAR from PRFAR using the ammonia provided by the HisH subunit. In Thermus thermophilus (strain ATCC BAA-163 / DSM 7039 / HB27), this protein is Imidazole glycerol phosphate synthase subunit HisF.